The following is a 545-amino-acid chain: Squalene monooxygenase SE2 (545 aa).

The helical transmembrane segment at 12-32 (EYFLMFAATLLFGFVLYLFTL) threads the bilayer. Residues 86 to 87 (VA), 106 to 107 (ER), arginine 114, arginine 185, valine 201, aspartate 364, and methionine 377 each bind FAD. 2 helical membrane passes run 475–495 (LFFH…IPFP) and 500–520 (MWLG…IIKS).

Belongs to the squalene monooxygenase family. FAD serves as cofactor. Weak expression in petioles and flower buds and barely detectable in roots and leaves. In petioles, preferentially observed in vascular bundle tissue (phloem cells and parenchymatous cells near xylem) and resin ducts.

The protein localises to the membrane. It carries out the reaction squalene + reduced [NADPH--hemoprotein reductase] + O2 = (S)-2,3-epoxysqualene + oxidized [NADPH--hemoprotein reductase] + H2O + H(+). The protein operates within terpene metabolism; lanosterol biosynthesis; lanosterol from farnesyl diphosphate: step 2/3. Its function is as follows. Component of the triterpene saponins (e.g. ginsenosides or panaxosides) and phytosterols biosynthetic pathways. Catalyzes the first oxygenation step in sterol biosynthesis and is suggested to be one of the rate-limiting enzymes in this pathway. The protein is Squalene monooxygenase SE2 of Panax ginseng (Korean ginseng).